Here is a 291-residue protein sequence, read N- to C-terminus: Transmembrane protein 41B (291 aa).

The interval 1 to 39 (MAKGRVAERSQLGAHHTTPVGDGAAGTRGLAAPGSRDHQ) is disordered. Thr-18 carries the post-translational modification Phosphothreonine. Residue Ser-35 is modified to Phosphoserine. The next 6 membrane-spanning stretches (helical) occupy residues 52–72 (MSLLILVSIFLSAAFVMFLVY), 109–129 (FYVQVLVAYFATYIFLQTFAI), 147–169 (LALFLVCLCSGLGASFCYMLSYL), 197–217 (LINYIIFLRITPFLPNWFINI), 225–245 (PLKVFFIGTFLGVAPPSFVAI), and 262–282 (SWNSIFILMILAVLSILPAIF). The interval 140-251 (GFLYPFPLAL…FVAIKAGTTL (112 aa)) is VTT domain; required for its function in autophagy.

Belongs to the TMEM41 family. In terms of assembly, interacts with VMP1. Interacts with COPA, COPB1, VDAC1 and ERLIN2. Interacts with ATG2A. Interacts with SURF4. As to quaternary structure, (Microbial infection) Interacts with Zika virus NS4A protein and Yellow fever virus NS4B protein.

Its subcellular location is the endoplasmic reticulum membrane. The protein localises to the endomembrane system. It localises to the cytoplasm. The catalysed reaction is a 1,2-diacyl-sn-glycero-3-phospho-L-serine(in) = a 1,2-diacyl-sn-glycero-3-phospho-L-serine(out). It carries out the reaction cholesterol(in) = cholesterol(out). It catalyses the reaction a 1,2-diacyl-sn-glycero-3-phosphocholine(in) = a 1,2-diacyl-sn-glycero-3-phosphocholine(out). The enzyme catalyses a 1,2-diacyl-sn-glycero-3-phosphoethanolamine(in) = a 1,2-diacyl-sn-glycero-3-phosphoethanolamine(out). In terms of biological role, phospholipid scramblase involved in lipid homeostasis and membrane dynamics processes. Has phospholipid scramblase activity toward cholesterol and phosphatidylserine, as well as phosphatidylethanolamine and phosphatidylcholine. Required for autophagosome formation: participates in early stages of autophagosome biogenesis at the endoplasmic reticulum (ER) membrane by reequilibrating the leaflets of the ER as lipids are extracted by ATG2 (ATG2A or ATG2B) to mediate autophagosome assembly. In addition to autophagy, involved in other processes in which phospholipid scramblase activity is required. Required for normal motor neuron development. Functionally, (Microbial infection) Critical host factor required for infection by human coronaviruses SARS-CoV-2, HCoV-OC43, HCoV-NL63, and HCoV-229E, as well as all flaviviruses tested such as Zika virus and Yellow fever virus. Required post-entry of the virus to facilitate the ER membrane remodeling necessary to form replication organelles. The polypeptide is Transmembrane protein 41B (Homo sapiens (Human)).